Here is a 562-residue protein sequence, read N- to C-terminus: Protein wntless (562 aa).

Over 1-13 (MSGTILENLSGRK) the chain is Cytoplasmic. The helical transmembrane segment at 14 to 34 (LSILVGSLLLCQVLCFLLGGL) threads the bilayer. Over 35 to 239 (YAPVPAGHTN…AIHQNGGFTH (205 aa)) the chain is Lumenal. The N-linked (GlcNAc...) asparagine glycan is linked to Asn58. Residues 240-260 (VWLMLKTLLFPFVVGIMVWFW) form a helical membrane-spanning segment. Residues 261–270 (RRVHLLQRSP) lie on the Cytoplasmic side of the membrane. The helical transmembrane segment at 271 to 291 (ALLEYMLLYLGGALTFLNLPL) threads the bilayer. At 292–311 (EYLSLTIEMPYMLLLSDIRQ) the chain is on the lumenal side. Residues 312–332 (GIFYAMLLSFWLVFAGEHMLI) form a helical membrane-spanning segment. Topologically, residues 333–344 (QDSSNKSTIRSR) are cytoplasmic. A helical transmembrane segment spans residues 345 to 365 (YWKHLSAVVVGCISLFVFDIS). The Lumenal segment spans residues 366–386 (ERGVQLRNPFYSIWTTPLGAK). Residues 387-407 (VAMSFILLAGVSAAVYFLFLC) traverse the membrane as a helical segment. Topologically, residues 408 to 441 (YMISKVFKNIGDKRTSLPSMSQARRLHYEGLIYR) are cytoplasmic. The chain crosses the membrane as a helical span at residues 442–462 (FKFLMLATLLCAALTVTGFIM). Topologically, residues 463-482 (GQMAEGQWKWNDDVEIQLTS) are lumenal. The chain crosses the membrane as a helical span at residues 483–503 (AFLTGVYGMWNIYIFALLILY). Topologically, residues 504–562 (APSHKQWPTMHHSDETTQSNENIVASAASEEIEFSNLPSDSNPSEISSLTSFTRKVAFE) are cytoplasmic. Residues 538–562 (SNLPSDSNPSEISSLTSFTRKVAFE) are disordered. The span at 539–556 (NLPSDSNPSEISSLTSFT) shows a compositional bias: polar residues.

The protein belongs to the wntless family. In terms of assembly, interacts with wg; in the Golgi. Interacts with Vps35, a component of the retromer complex; wls stability is regulated by Vps35.

The protein localises to the presynaptic cell membrane. It is found in the postsynaptic cell membrane. Its subcellular location is the cell membrane. It localises to the endoplasmic reticulum membrane. The protein resides in the endosome membrane. The protein localises to the golgi apparatus membrane. Functionally, a segment polarity gene required for wingless (wg)-dependent patterning processes, acting in both wg-sending cells and wg-target cells. In non-neuronal cells wls directs wg secretion. The wls traffic loop encompasses the Golgi, the cell surface, an endocytic compartment and a retrograde route leading back to the Golgi, and involves clathrin-mediated endocytosis and the retromer complex (a conserved protein complex consisting of Vps35 and Vps26). In neuronal cells (the larval motorneuron NMJ), the wg signal moves across the synapse via the release of wls-containing exosome-like vesicles. Postsynaptic wls is required for the trafficking of fz2 through the fz2-interacting protein Grip. This chain is Protein wntless, found in Drosophila pseudoobscura pseudoobscura (Fruit fly).